We begin with the raw amino-acid sequence, 702 residues long: MADS-box MEF2 type transcription factor MIG1 (702 aa).

The MADS-box domain occupies 1–61; the sequence is MGRRKIEIKA…KKLYEYSSGD (61 aa). Disordered regions lie at residues 73–608 and 658–702; these read GGAT…NIDT and PSFL…KVDS. A compositionally biased stretch (acidic residues) spans 86–96; sequence GGDDDDEEEGD. A compositionally biased stretch (pro residues) spans 132–144; the sequence is ASPPIPNGVPFPP. Positions 145–155 are enriched in low complexity; sequence HGHGVPRGHTP. Residues 180-195 show a composition bias toward polar residues; it reads GSPQVNGFGFGQQQSM. Pro residues predominate over residues 201–241; it reads TTMPPHMPPQMAPGPPFPYPQHPQHPPHPPHPPHPPHPQQP. Composition is skewed to low complexity over residues 273 to 284, 326 to 343, and 350 to 371; these read PMGMQRHSVSPP, ESPQ…QQPE, and EQQQ…QSEP. A compositionally biased stretch (polar residues) spans 456–465; that stretch reads VDESTSNASE. 2 stretches are compositionally biased toward low complexity: residues 487–512 and 530–553; these read RASI…SLRA and DGSG…DATS. Polar residues predominate over residues 554 to 567; it reads QSTRQNDSHSSTNM. Over residues 587-600 the composition is skewed to pro residues; it reads PPNPFAPKRPPQHP. Over residues 693 to 702 the composition is skewed to basic and acidic residues; that stretch reads NEPKRVKVDS.

Belongs to the MEF2 family. Interacts with MAPK MPS1.

The protein localises to the nucleus. Its function is as follows. Transcription factor acting downstream of the MPS1 MAP kinase (MAPK) cascade during conidiation and plant infection. Required for overcoming plant defense responses and the differentiation of secondary infectious hyphae in live plant cells. This chain is MADS-box MEF2 type transcription factor MIG1, found in Pyricularia oryzae (strain 70-15 / ATCC MYA-4617 / FGSC 8958) (Rice blast fungus).